The chain runs to 179 residues: MQTRYDLILGSRRFSNYLWTLISFSGGIGFLLAGLSSYLGVQLLPFGNTETIVFIPQGIVMTFYGTIGILLSLFLLLNISLNVGGGYNSYDKSTGAIQIFRLGFPGKRRKILLQYKIQEIKSIKLSIAEGLNPKREIYLQTKDQRQIPLTRVGEPLLLSQIEEEAVELANFLNIPLEGL.

The next 2 membrane-spanning stretches (helical) occupy residues 21–41 and 59–79; these read LISFSGGIGFLLAGLSSYLGV and IVMTFYGTIGILLSLFLLLNI.

Belongs to the Ycf4 family.

Its subcellular location is the plastid. The protein resides in the chloroplast thylakoid membrane. Its function is as follows. Seems to be required for the assembly of the photosystem I complex. This Rhodomonas salina (Cryptomonas salina) protein is Photosystem I assembly protein Ycf4.